A 408-amino-acid chain; its full sequence is Epsin-3 (408 aa).

Serine 2 is subject to N-acetylserine. The region spanning 24–157 is the ENTH domain; that stretch reads NVVFNYTEME…SDDNKIRAER (134 aa). The interval 162-182 is disordered; it reads ETAKKYKGVAGGSASADGSLN. Residues serine 196, serine 198, serine 203, serine 212, and serine 223 each carry the phosphoserine modification. Disordered regions lie at residues 199-322 and 338-408; these read ADFD…ITPA and TAKA…LLSF. Residues 201–210 are compositionally biased toward acidic residues; the sequence is FDSDNEDNED. Polar residues predominate over residues 211-231; sequence GSFSQNGYNDNASRATSTPGQ. Over residues 249 to 263 the composition is skewed to basic and acidic residues; sequence KPSKELIQEDEKKAD. A compositionally biased stretch (acidic residues) spans 264-273; that stretch reads EEEDDDDEFS. Positions 279-317 are enriched in polar residues; it reads VPVTNPANSFNLLNTSPIEGMPATTSSMPFYNSSTTDQG. Positions 338-361 are enriched in low complexity; that stretch reads TAKASAEAPSAPKASQAKAAASNP. 2 stretches are compositionally biased toward polar residues: residues 362 to 371 and 388 to 398; these read VSNSTTALST and QQEQNTNNNHT. Basic and acidic residues predominate over residues 399 to 408; sequence SSKEIDLLSF.

Interacts with the clathrin adapter GGA2, and VPS27.

The protein localises to the cytoplasm. It is found in the golgi apparatus. Its subcellular location is the trans-Golgi network membrane. It localises to the cytoplasmic vesicle. The protein resides in the clathrin-coated vesicle membrane. Its function is as follows. Involved in the recruitment of clathrin to the Golgi network and endosomes to form clathrin coated vesicles. Plays a role in the trafficking of clathrin between the Golgi network and endosomes. Binds to membranes enriched in phosphatidylinositol-3,5-bisphosphate (PtdIns(3,5)P2) and, in association with VPS27, is involved in protein sorting at the multivesicular body (MVB). In Saccharomyces cerevisiae (strain ATCC 204508 / S288c) (Baker's yeast), this protein is Epsin-3 (ENT3).